The primary structure comprises 689 residues: Glycine--tRNA ligase beta subunit (689 aa).

The protein belongs to the class-II aminoacyl-tRNA synthetase family. As to quaternary structure, tetramer of two alpha and two beta subunits.

The protein localises to the cytoplasm. The enzyme catalyses tRNA(Gly) + glycine + ATP = glycyl-tRNA(Gly) + AMP + diphosphate. The polypeptide is Glycine--tRNA ligase beta subunit (Shewanella baltica (strain OS185)).